Consider the following 242-residue polypeptide: 3-deoxy-manno-octulosonate cytidylyltransferase (242 aa).

Belongs to the KdsB family.

The protein localises to the cytoplasm. The catalysed reaction is 3-deoxy-alpha-D-manno-oct-2-ulosonate + CTP = CMP-3-deoxy-beta-D-manno-octulosonate + diphosphate. Its pathway is nucleotide-sugar biosynthesis; CMP-3-deoxy-D-manno-octulosonate biosynthesis; CMP-3-deoxy-D-manno-octulosonate from 3-deoxy-D-manno-octulosonate and CTP: step 1/1. The protein operates within bacterial outer membrane biogenesis; lipopolysaccharide biosynthesis. Its function is as follows. Activates KDO (a required 8-carbon sugar) for incorporation into bacterial lipopolysaccharide in Gram-negative bacteria. This chain is 3-deoxy-manno-octulosonate cytidylyltransferase, found in Anaeromyxobacter sp. (strain K).